Consider the following 394-residue polypeptide: NAD(P)H-quinone oxidoreductase subunit H (394 aa).

This sequence belongs to the complex I 49 kDa subunit family. As to quaternary structure, NDH-1 can be composed of about 15 different subunits; different subcomplexes with different compositions have been identified which probably have different functions.

The protein localises to the cellular thylakoid membrane. It catalyses the reaction a plastoquinone + NADH + (n+1) H(+)(in) = a plastoquinol + NAD(+) + n H(+)(out). The enzyme catalyses a plastoquinone + NADPH + (n+1) H(+)(in) = a plastoquinol + NADP(+) + n H(+)(out). Functionally, NDH-1 shuttles electrons from an unknown electron donor, via FMN and iron-sulfur (Fe-S) centers, to quinones in the respiratory and/or the photosynthetic chain. The immediate electron acceptor for the enzyme in this species is believed to be plastoquinone. Couples the redox reaction to proton translocation, and thus conserves the redox energy in a proton gradient. Cyanobacterial NDH-1 also plays a role in inorganic carbon-concentration. This Prochlorococcus marinus (strain MIT 9211) protein is NAD(P)H-quinone oxidoreductase subunit H.